The chain runs to 308 residues: Probable GTP 3',8-cyclase (308 aa).

The 221-residue stretch at 4 to 224 (RFGRPLEDLR…QIRKKHFRPR (221 aa)) folds into the Radical SAM core domain. R13 is a binding site for GTP. [4Fe-4S] cluster-binding residues include C20, C24, and C27. Position 60 (K60) interacts with GTP. S-adenosyl-L-methionine is bound at residue G64. GTP is bound at residue T90. S114 provides a ligand contact to S-adenosyl-L-methionine. Position 151 (K151) interacts with GTP. Residues C245 and C248 each contribute to the [4Fe-4S] cluster site. 250 to 252 (RIR) serves as a coordination point for GTP. Residue C262 coordinates [4Fe-4S] cluster.

Belongs to the radical SAM superfamily. MoaA family. Requires [4Fe-4S] cluster as cofactor.

The catalysed reaction is GTP + AH2 + S-adenosyl-L-methionine = (8S)-3',8-cyclo-7,8-dihydroguanosine 5'-triphosphate + 5'-deoxyadenosine + L-methionine + A + H(+). It functions in the pathway cofactor biosynthesis; molybdopterin biosynthesis. Catalyzes the cyclization of GTP to (8S)-3',8-cyclo-7,8-dihydroguanosine 5'-triphosphate. The polypeptide is Probable GTP 3',8-cyclase (Saccharolobus islandicus (strain Y.N.15.51 / Yellowstone #2) (Sulfolobus islandicus)).